A 353-amino-acid chain; its full sequence is Photosystem II D2 protein (353 aa).

Position 2 is an N-acetylthreonine (threonine 2). At threonine 2 the chain carries Phosphothreonine. The chain crosses the membrane as a helical span at residues 41-61; that stretch reads CAYFALGGWFTGTTFVTSWYT. Position 118 (histidine 118) interacts with chlorophyll a. Residues 125–141 form a helical membrane-spanning segment; that stretch reads GFMLRQFELARSVQLRP. The pheophytin a site is built by glutamine 130 and asparagine 143. A helical transmembrane segment spans residues 153–166; it reads VFVSVFLIYPLGQS. A chlorophyll a-binding site is contributed by histidine 198. The chain crosses the membrane as a helical span at residues 208–228; the sequence is AALLCAIHGATVENTLFEDGD. Histidine 215 and phenylalanine 262 together coordinate a plastoquinone. Residue histidine 215 participates in Fe cation binding. Fe cation is bound at residue histidine 269. A helical transmembrane segment spans residues 279 to 295; the sequence is GLWMSALGVVGLALNLR.

The protein belongs to the reaction center PufL/M/PsbA/D family. In terms of assembly, PSII is composed of 1 copy each of membrane proteins PsbA, PsbB, PsbC, PsbD, PsbE, PsbF, PsbH, PsbI, PsbJ, PsbK, PsbL, PsbM, PsbT, PsbX, PsbY, PsbZ, Psb30/Ycf12, at least 3 peripheral proteins of the oxygen-evolving complex and a large number of cofactors. It forms dimeric complexes. It depends on The D1/D2 heterodimer binds P680, chlorophylls that are the primary electron donor of PSII, and subsequent electron acceptors. It shares a non-heme iron and each subunit binds pheophytin, quinone, additional chlorophylls, carotenoids and lipids. There is also a Cl(-1) ion associated with D1 and D2, which is required for oxygen evolution. The PSII complex binds additional chlorophylls, carotenoids and specific lipids. as a cofactor.

The protein localises to the plastid. It is found in the chloroplast thylakoid membrane. The catalysed reaction is 2 a plastoquinone + 4 hnu + 2 H2O = 2 a plastoquinol + O2. Photosystem II (PSII) is a light-driven water:plastoquinone oxidoreductase that uses light energy to abstract electrons from H(2)O, generating O(2) and a proton gradient subsequently used for ATP formation. It consists of a core antenna complex that captures photons, and an electron transfer chain that converts photonic excitation into a charge separation. The D1/D2 (PsbA/PsbD) reaction center heterodimer binds P680, the primary electron donor of PSII as well as several subsequent electron acceptors. D2 is needed for assembly of a stable PSII complex. This Aethionema grandiflorum (Persian stone-cress) protein is Photosystem II D2 protein.